A 111-amino-acid polypeptide reads, in one-letter code: Translation initiation factor 1A (111 aa).

Over residues 1-13 the composition is skewed to basic residues; sequence MKKSNNKNNHKNN. The disordered stretch occupies residues 1-30; sequence MKKSNNKNNHKNNHNNNQGGENIRVRSPRR. The region spanning 23–96 is the S1-like domain; it reads IRVRSPRRGE…EKADVIWRYT (74 aa).

It belongs to the eIF-1A family.

Functionally, seems to be required for maximal rate of protein biosynthesis. Enhances ribosome dissociation into subunits and stabilizes the binding of the initiator Met-tRNA(I) to 40 S ribosomal subunits. In Methanosphaera stadtmanae (strain ATCC 43021 / DSM 3091 / JCM 11832 / MCB-3), this protein is Translation initiation factor 1A.